Reading from the N-terminus, the 85-residue chain is uncharacterized protein (85 aa).

This sequence belongs to the YciI family.

This is an uncharacterized protein from Bacillus subtilis (strain 168).